Reading from the N-terminus, the 348-residue chain is S-adenosylmethionine:tRNA ribosyltransferase-isomerase (348 aa).

Belongs to the QueA family. In terms of assembly, monomer.

Its subcellular location is the cytoplasm. It catalyses the reaction 7-aminomethyl-7-carbaguanosine(34) in tRNA + S-adenosyl-L-methionine = epoxyqueuosine(34) in tRNA + adenine + L-methionine + 2 H(+). It functions in the pathway tRNA modification; tRNA-queuosine biosynthesis. Transfers and isomerizes the ribose moiety from AdoMet to the 7-aminomethyl group of 7-deazaguanine (preQ1-tRNA) to give epoxyqueuosine (oQ-tRNA). This chain is S-adenosylmethionine:tRNA ribosyltransferase-isomerase, found in Amoebophilus asiaticus (strain 5a2).